The sequence spans 207 residues: Ribosomal RNA large subunit methyltransferase E (207 aa).

Gly60, Trp62, Asp80, Asp96, and Asp121 together coordinate S-adenosyl-L-methionine. Lys161 acts as the Proton acceptor in catalysis.

It belongs to the class I-like SAM-binding methyltransferase superfamily. RNA methyltransferase RlmE family.

It localises to the cytoplasm. The catalysed reaction is uridine(2552) in 23S rRNA + S-adenosyl-L-methionine = 2'-O-methyluridine(2552) in 23S rRNA + S-adenosyl-L-homocysteine + H(+). Specifically methylates the uridine in position 2552 of 23S rRNA at the 2'-O position of the ribose in the fully assembled 50S ribosomal subunit. The polypeptide is Ribosomal RNA large subunit methyltransferase E (Thioalkalivibrio sulfidiphilus (strain HL-EbGR7)).